Consider the following 122-residue polypeptide: Protein C10 (122 aa).

The protein belongs to the UPF0456 family.

It is found in the cytoplasm. This is Protein C10 from Danio rerio (Zebrafish).